The chain runs to 539 residues: Zinc finger and BTB domain-containing protein 7B (539 aa).

The region spanning 34 to 115 is the BTB domain; the sequence is CDLTIRTQGL…AYTATLTTSS (82 aa). S150 carries the post-translational modification Phosphoserine. The interval 171 to 308 is disordered; the sequence is ASGVPNGEDS…SPEELGSDED (138 aa). The span at 182–196 shows a compositional bias: pro residues; it reads PQVPLPPPPPPPPRP. Residues 197–206 show a composition bias toward basic residues; that stretch reads VARRSRKPRK. Residues K206 and K212 each carry the N6-acetyllysine; by EP300; alternate modification. Residues K206 and K212 each participate in a glycyl lysine isopeptide (Lys-Gly) (interchain with G-Cter in ubiquitin); alternate cross-link. Positions 273 to 282 are enriched in acidic residues; that stretch reads YEGEEEEEEL. An N6-acetyllysine; by EP300; alternate modification is found at K335. K335 is covalently cross-linked (Glycyl lysine isopeptide (Lys-Gly) (interchain with G-Cter in ubiquitin); alternate). The required for interaction with and acetylation by EP300 stretch occupies residues 344-400; it reads MPQECPVCHKIIHGAGKLPRHMRTHTGEKPFACEVCGVRFTRNDKLKIHMRKHTGER. The C2H2-type 1 zinc finger occupies 346–368; sequence QECPVCHKIIHGAGKLPRHMRTH. T369 carries the post-translational modification Phosphothreonine. C2H2-type zinc fingers lie at residues 374-396 and 402-424; these read FACEVCGVRFTRNDKLKIHMRKH and YSCPHCPARFLHSYDLKNHMHLH. The segment at 430 to 454 adopts a C2H2-type 4; atypical zinc-finger fold; it reads YECHLCHKAFAKEDHLQRHLKGQNC. Disordered regions lie at residues 458–486 and 501–539; these read RTRRRRKDDAPPHYPPPSTAAASPAGLDL and FWEQSAPTGPPVSTPGPPDDDEEEGAPTTPQAEGAMESS. Residues 508-517 are compositionally biased toward pro residues; that stretch reads TGPPVSTPGP.

As to quaternary structure, homodimerizes. Interacts with NCL, NEDD4 and YBX1. Interacts with HNRNPU (via RNA-binding RGG-box region); the interaction facilitates the recruitment of long non-coding RNA Blnc1 by ZBTB7B. Interacts with HDAC4 and HDAC5; the interaction allows the recruitment of HDAC4 and HDAC5 on CD8 loci for deacetylation and possible inhibition of CD8 genes expression. In terms of processing, acetylated directly and specifically by EP300. EP300-mediated acetylation of Lys-206, Lys-212 and Lys-335 stabilizes the protein by antagonizing ubiquitin conjugation. Post-translationally, ubiquitinated, leading to proteasomal degradation. Competes with acetylation on Lys-206, Lys-212 and Lys-335.

The protein resides in the nucleus. Transcription regulator that acts as a key regulator of lineage commitment of immature T-cell precursors. Exerts distinct biological functions in the mammary epithelial cells and T cells in a tissue-specific manner. Necessary and sufficient for commitment of CD4 lineage, while its absence causes CD8 commitment. Development of immature T-cell precursors (thymocytes) to either the CD4 helper or CD8 killer T-cell lineages correlates precisely with their T-cell receptor specificity for major histocompatibility complex class II or class I molecules, respectively. Cross-antagonism between ZBTB7B and CBF complexes are determinative to CD4 versus CD8 cell fate decision. Suppresses RUNX3 expression and imposes CD4+ lineage fate by inducing the SOCS suppressors of cytokine signaling. induces, as a transcriptional activator, SOCS genes expression which represses RUNX3 expression and promotes the CD4+ lineage fate. During CD4 lineage commitment, associates with multiple sites at the CD8 locus, acting as a negative regulator of the CD8 promoter and enhancers by epigenetic silencing through the recruitment of class II histone deacetylases, such as HDAC4 and HDAC5, to these loci. Regulates the development of IL17-producing CD1d-restricted naural killer (NK) T cells. Also functions as an important metabolic regulator in the lactating mammary glands. Critical feed-forward regulator of insulin signaling in mammary gland lactation, directly regulates expression of insulin receptor substrate-1 (IRS-1) and insulin-induced Akt-mTOR-SREBP signaling. Transcriptional repressor of the collagen COL1A1 and COL1A2 genes. May also function as a repressor of fibronectin and possibly other extracellular matrix genes. Potent driver of brown fat development, thermogenesis and cold-induced beige fat formation. Recruits the brown fat lncRNA 1 (Blnc1):HNRNPU ribonucleoprotein complex to activate thermogenic gene expression in brown and beige adipocytes. This is Zinc finger and BTB domain-containing protein 7B from Homo sapiens (Human).